A 154-amino-acid chain; its full sequence is Transcriptional repressor NrdR (154 aa).

A zinc finger spans residues 3-34; the sequence is CPHCHKNGSRVVDSRPSEDGSFIRRRRECIHC. The 91-residue stretch at 49-139 folds into the ATP-cone domain; it reads LLVIKKDGTR…VYRQFKDVDA (91 aa).

It belongs to the NrdR family. Requires Zn(2+) as cofactor.

Functionally, negatively regulates transcription of bacterial ribonucleotide reductase nrd genes and operons by binding to NrdR-boxes. This Limosilactobacillus reuteri (strain DSM 20016) (Lactobacillus reuteri) protein is Transcriptional repressor NrdR.